Here is a 621-residue protein sequence, read N- to C-terminus: Cystathionine gamma-synthase (621 aa).

Lys429 carries the N6-(pyridoxal phosphate)lysine modification.

This sequence belongs to the trans-sulfuration enzymes family. MET7 subfamily. In terms of assembly, both met-3 and met-7 are required to form a functional cystathionine gamma-synthase. The cofactor is pyridoxal 5'-phosphate.

The catalysed reaction is O-succinyl-L-homoserine + L-cysteine = L,L-cystathionine + succinate + H(+). The protein operates within amino-acid biosynthesis; L-methionine biosynthesis via de novo pathway; L-cystathionine from O-succinyl-L-homoserine: step 1/1. In terms of biological role, catalyzes the formation of L-cystathionine from O-succinyl-L-homoserine (OSHS) and L-cysteine, via a gamma-replacement reaction. In the absence of thiol, catalyzes gamma-elimination to form 2-oxobutanoate, succinate and ammonia. This Neurospora crassa (strain ATCC 24698 / 74-OR23-1A / CBS 708.71 / DSM 1257 / FGSC 987) protein is Cystathionine gamma-synthase (met-7).